Consider the following 108-residue polypeptide: Ig kappa chain V-V region HP 93G7 (108 aa).

The interval 1 to 23 is framework-1; sequence DIQMTQTTSSLSASLGDRVTISC. Cys-23 and Cys-88 are disulfide-bonded. Residues 24–34 form a complementarity-determining-1 region; it reads RASQDISNYLN. The tract at residues 35-49 is framework-2; the sequence is WYQQKPDGTVKLLIY. The segment at 50-56 is complementarity-determining-2; the sequence is YTSRLHS. Positions 57 to 88 are framework-3; that stretch reads GVPSRFSGSGSGTDYSLTISNLEQEDIATYFC. The segment at 89-97 is complementarity-determining-3; sequence QQGNMLPRT. The tract at residues 98–108 is framework-4; that stretch reads FGGGTKLEIKR.

The sequence is that of Ig kappa chain V-V region HP 93G7 from Mus musculus (Mouse).